We begin with the raw amino-acid sequence, 102 residues long: Putative pterin-4-alpha-carbinolamine dehydratase (102 aa).

It belongs to the pterin-4-alpha-carbinolamine dehydratase family.

The catalysed reaction is (4aS,6R)-4a-hydroxy-L-erythro-5,6,7,8-tetrahydrobiopterin = (6R)-L-erythro-6,7-dihydrobiopterin + H2O. In Burkholderia multivorans (strain ATCC 17616 / 249), this protein is Putative pterin-4-alpha-carbinolamine dehydratase.